The following is a 391-amino-acid chain: Formate-dependent phosphoribosylglycinamide formyltransferase (391 aa).

N(1)-(5-phospho-beta-D-ribosyl)glycinamide is bound by residues 18 to 19 (EL) and Glu78. Residues Arg110, Lys151, 156 to 161 (SSGKGQ), 191 to 194 (EEFI), and Glu199 contribute to the ATP site. One can recognise an ATP-grasp domain in the interval 115 to 305 (ELAHEELGIR…EFELHLRAIL (191 aa)). Residues Glu264 and Glu276 each coordinate Mg(2+). N(1)-(5-phospho-beta-D-ribosyl)glycinamide is bound by residues Asp283, Lys353, and 360–361 (RR).

This sequence belongs to the PurK/PurT family. As to quaternary structure, homodimer.

It carries out the reaction N(1)-(5-phospho-beta-D-ribosyl)glycinamide + formate + ATP = N(2)-formyl-N(1)-(5-phospho-beta-D-ribosyl)glycinamide + ADP + phosphate + H(+). It participates in purine metabolism; IMP biosynthesis via de novo pathway; N(2)-formyl-N(1)-(5-phospho-D-ribosyl)glycinamide from N(1)-(5-phospho-D-ribosyl)glycinamide (formate route): step 1/1. Functionally, involved in the de novo purine biosynthesis. Catalyzes the transfer of formate to 5-phospho-ribosyl-glycinamide (GAR), producing 5-phospho-ribosyl-N-formylglycinamide (FGAR). Formate is provided by PurU via hydrolysis of 10-formyl-tetrahydrofolate. This is Formate-dependent phosphoribosylglycinamide formyltransferase from Nostoc sp. (strain PCC 7120 / SAG 25.82 / UTEX 2576).